The following is a 31-amino-acid chain: Superoxide dismutase [Cu-Zn] (31 aa).

This sequence belongs to the Cu-Zn superoxide dismutase family. Cu cation serves as cofactor. It depends on Zn(2+) as a cofactor.

Its subcellular location is the cytoplasm. The catalysed reaction is 2 superoxide + 2 H(+) = H2O2 + O2. Its function is as follows. Destroys radicals which are normally produced within the cells and which are toxic to biological systems. This chain is Superoxide dismutase [Cu-Zn], found in Striga hermonthica (Purple witchweed).